The chain runs to 295 residues: F-box only protein 6 (295 aa).

The region spanning 1–48 (MVHINELPENILLELFIHIPAPQLLRNCRLVCRLWRDLIDVVSLWKRK) is the F-box domain. The region spanning 69–250 (FYILCSLQRN…VTNSSIIISH (182 aa)) is the FBA domain. A phosphoserine mark is found at Ser249 and Ser276. Thr280 carries the phosphothreonine modification.

In terms of assembly, interacts with CHEK1 and CUL1. Part of a SCF (SKP1-cullin-F-box) protein ligase complex. Interacts with VCP. In terms of tissue distribution, present in liver and kidney (at protein level). Widely expressed.

Its subcellular location is the cytoplasm. Its pathway is protein modification; protein ubiquitination. Substrate-recognition component of some SCF (SKP1-CUL1-F-box protein)-type E3 ubiquitin ligase complexes. Involved in DNA damage response by specifically recognizing activated CHEK1 (phosphorylated on 'Ser-345'), promoting its ubiquitination and degradation. Ubiquitination of CHEK1 is required to ensure that activated CHEK1 does not accumulate as cells progress through S phase, or when replication forks encounter transient impediments during normal DNA replication. Involved in endoplasmic reticulum-associated degradation pathway (ERAD) for misfolded lumenal proteins by recognizing and binding sugar chains on unfolded glycoproteins that are retrotranslocated into the cytosol and promoting their ubiquitination and subsequent degradation. Able to recognize and bind denatured glycoproteins, which are modified with not only high-mannose but also complex-type oligosaccharides. Also recognizes sulfated glycans. The sequence is that of F-box only protein 6 (Fbxo6) from Mus musculus (Mouse).